The following is a 168-amino-acid chain: RNA pyrophosphohydrolase (168 aa).

In terms of domain architecture, Nudix hydrolase spans 8 to 160 (PYRPCVGLAI…KRQVYERVAR (153 aa)). The Nudix box signature appears at 47-68 (GGIDKGEEPYEAALRELYEETS).

It belongs to the Nudix hydrolase family. RppH subfamily. It depends on a divalent metal cation as a cofactor.

Its function is as follows. Accelerates the degradation of transcripts by removing pyrophosphate from the 5'-end of triphosphorylated RNA, leading to a more labile monophosphorylated state that can stimulate subsequent ribonuclease cleavage. This is RNA pyrophosphohydrolase from Azorhizobium caulinodans (strain ATCC 43989 / DSM 5975 / JCM 20966 / LMG 6465 / NBRC 14845 / NCIMB 13405 / ORS 571).